Here is a 372-residue protein sequence, read N- to C-terminus: O-glycoside alpha-1,2-mannosyltransferase homolog 2 (372 aa).

Over 1-6 (MRISRL) the chain is Cytoplasmic. A helical; Signal-anchor for type II membrane protein transmembrane segment spans residues 7 to 27 (LIRVLLGFVILFITYILFPSI). Topologically, residues 28 to 372 (PKALVNTLNV…NLTNEDYDEL (345 aa)) are lumenal. Residue glutamate 271 is the Nucleophile of the active site.

The protein belongs to the glycosyltransferase 15 family.

It is found in the endoplasmic reticulum membrane. Functionally, probable mannosyltransferase involved in O-glycosylation of cell wall and secreted proteins. The chain is O-glycoside alpha-1,2-mannosyltransferase homolog 2 (omh2) from Schizosaccharomyces pombe (strain 972 / ATCC 24843) (Fission yeast).